The primary structure comprises 176 residues: ATP-dependent protease subunit HslV (176 aa).

The active site involves T2. Na(+) contacts are provided by G157, C160, and T163.

Belongs to the peptidase T1B family. HslV subfamily. In terms of assembly, a double ring-shaped homohexamer of HslV is capped on each side by a ring-shaped HslU homohexamer. The assembly of the HslU/HslV complex is dependent on binding of ATP.

Its subcellular location is the cytoplasm. The catalysed reaction is ATP-dependent cleavage of peptide bonds with broad specificity.. Allosterically activated by HslU binding. Functionally, protease subunit of a proteasome-like degradation complex believed to be a general protein degrading machinery. This is ATP-dependent protease subunit HslV from Erwinia tasmaniensis (strain DSM 17950 / CFBP 7177 / CIP 109463 / NCPPB 4357 / Et1/99).